The chain runs to 193 residues: 7-methyl-GTP pyrophosphatase (193 aa).

Residue Asp-70 is the Proton acceptor of the active site.

This sequence belongs to the Maf family. YceF subfamily. The cofactor is a divalent metal cation.

The protein resides in the cytoplasm. It catalyses the reaction N(7)-methyl-GTP + H2O = N(7)-methyl-GMP + diphosphate + H(+). In terms of biological role, nucleoside triphosphate pyrophosphatase that hydrolyzes 7-methyl-GTP (m(7)GTP). May have a dual role in cell division arrest and in preventing the incorporation of modified nucleotides into cellular nucleic acids. The sequence is that of 7-methyl-GTP pyrophosphatase from Aliivibrio fischeri (strain ATCC 700601 / ES114) (Vibrio fischeri).